A 161-amino-acid chain; its full sequence is Cell division protein SepF (161 aa).

This sequence belongs to the SepF family. In terms of assembly, homodimer. Interacts with FtsZ.

Its subcellular location is the cytoplasm. Functionally, cell division protein that is part of the divisome complex and is recruited early to the Z-ring. Probably stimulates Z-ring formation, perhaps through the cross-linking of FtsZ protofilaments. Its function overlaps with FtsA. This Finegoldia magna (strain ATCC 29328 / DSM 20472 / WAL 2508) (Peptostreptococcus magnus) protein is Cell division protein SepF.